A 240-amino-acid polypeptide reads, in one-letter code: Aquaporin Z (240 aa).

Helical transmembrane passes span 10–30 and 35–55; these read MIGT…AAGF and IGLV…AYAI. Positions 64 to 66 match the NPA 1 motif; the sequence is NPA. Transmembrane regions (helical) follow at residues 90–110, 131–151, and 160–180; these read VLGA…AAGF, LVAC…VIMG, and GFAP…SIPV. Positions 186–188 match the NPA 2 motif; it reads NPA. Residues 202 to 222 traverse the membrane as a helical segment; sequence IGQLWLFWVAPLLGGVLGGVI.

The protein belongs to the MIP/aquaporin (TC 1.A.8) family. Homotetramer.

Its subcellular location is the cell inner membrane. It carries out the reaction H2O(in) = H2O(out). In terms of biological role, channel that permits osmotically driven movement of water in both directions. It is involved in the osmoregulation and in the maintenance of cell turgor during volume expansion in rapidly growing cells. It mediates rapid entry or exit of water in response to abrupt changes in osmolarity. This chain is Aquaporin Z, found in Rhodopseudomonas palustris (strain ATCC BAA-98 / CGA009).